Here is a 334-residue protein sequence, read N- to C-terminus: Glyceraldehyde-3-phosphate dehydrogenase (334 aa).

NAD(+)-binding positions include 12–13, aspartate 34, and arginine 79; that span reads RI. D-glyceraldehyde 3-phosphate-binding positions include 150–152, threonine 181, 210–211, and arginine 233; these read SCT and TG. Catalysis depends on cysteine 151, which acts as the Nucleophile. Asparagine 315 serves as a coordination point for NAD(+).

It belongs to the glyceraldehyde-3-phosphate dehydrogenase family. In terms of assembly, homotetramer.

The protein localises to the cytoplasm. The catalysed reaction is D-glyceraldehyde 3-phosphate + phosphate + NAD(+) = (2R)-3-phospho-glyceroyl phosphate + NADH + H(+). Its pathway is carbohydrate degradation; glycolysis; pyruvate from D-glyceraldehyde 3-phosphate: step 1/5. This is Glyceraldehyde-3-phosphate dehydrogenase (GPD) from Wickerhamomyces ciferrii (strain ATCC 14091 / BCRC 22168 / CBS 111 / JCM 3599 / NBRC 0793 / NRRL Y-1031 F-60-10) (Yeast).